The primary structure comprises 629 residues: tRNA uridine 5-carboxymethylaminomethyl modification enzyme MnmG (629 aa).

Residues 13–18, Val-125, and Ser-180 each bind FAD; that span reads GGGHAG. Residue 273-287 participates in NAD(+) binding; that stretch reads GPRYCPSIEDKVMRF. An FAD-binding site is contributed by Gln-370.

The protein belongs to the MnmG family. As to quaternary structure, homodimer. Heterotetramer of two MnmE and two MnmG subunits. It depends on FAD as a cofactor.

The protein resides in the cytoplasm. In terms of biological role, NAD-binding protein involved in the addition of a carboxymethylaminomethyl (cmnm) group at the wobble position (U34) of certain tRNAs, forming tRNA-cmnm(5)s(2)U34. This chain is tRNA uridine 5-carboxymethylaminomethyl modification enzyme MnmG, found in Salmonella choleraesuis (strain SC-B67).